Reading from the N-terminus, the 223-residue chain is UPF0441 protein YgiB (223 aa).

The interval 201-223 (ESVAKQSAMQRSAAGTSTRSMGG) is disordered. Positions 204–223 (AKQSAMQRSAAGTSTRSMGG) are enriched in polar residues.

Belongs to the UPF0441 family.

This Salmonella arizonae (strain ATCC BAA-731 / CDC346-86 / RSK2980) protein is UPF0441 protein YgiB.